The chain runs to 757 residues: RNA-directed RNA polymerase catalytic subunit (757 aa).

The segment at 50 to 82 (SEKGKWTTNTETGAPQLNPIDGPLPEDNEPSGY) is disordered. The segment covering 55–64 (WTTNTETGAP) has biased composition (polar residues). Short sequence motifs (nuclear localization signal) lie at residues 187-195 (RKRRVRDNM) and 203-216 (RTIG…NKRS). Positions 249 to 256 (RGFVYFVE) are promoter-binding site. A RdRp catalytic domain is found at 286–483 (VRKMMTNSQD…GINMSKKKSY (198 aa)).

The protein belongs to the influenza viruses polymerase PB1 family. Influenza RNA polymerase is composed of three subunits: PB1, PB2 and PA. Interacts (via N-terminus) with PA (via C-terminus). Interacts (via C-terminus) with PB2 (via N-terminus); this interaction is essential for transcription initiation. In terms of processing, phosphorylated by host PRKCA.

It localises to the host nucleus. The protein resides in the host cytoplasm. It carries out the reaction RNA(n) + a ribonucleoside 5'-triphosphate = RNA(n+1) + diphosphate. Its function is as follows. RNA-dependent RNA polymerase which is responsible for replication and transcription of virus RNA segments. The transcription of viral mRNAs occurs by a unique mechanism called cap-snatching. 5' methylated caps of cellular mRNAs are cleaved after 10-13 nucleotides by PA. In turn, these short capped RNAs are used as primers by PB1 for transcription of viral mRNAs. During virus replication, PB1 initiates RNA synthesis and copy vRNA into complementary RNA (cRNA) which in turn serves as a template for the production of more vRNAs. This chain is RNA-directed RNA polymerase catalytic subunit, found in Influenza A virus (strain A/Memphis/110/1976 H3N2).